The following is a 328-amino-acid chain: Thiamine thiazole synthase (328 aa).

Substrate-binding positions include alanine 87, 108 to 109 (EA), glycine 116, and valine 181. Cysteine 215 is modified (2,3-didehydroalanine (Cys)). Residues aspartate 217, histidine 232, methionine 284, and 294-296 (RMG) each bind substrate.

Belongs to the THI4 family. Homooctamer. Requires Fe cation as cofactor. In terms of processing, during the catalytic reaction, a sulfide is transferred from Cys-215 to a reaction intermediate, generating a dehydroalanine residue.

It localises to the cytoplasm. The protein resides in the nucleus. The enzyme catalyses [ADP-thiazole synthase]-L-cysteine + glycine + NAD(+) = [ADP-thiazole synthase]-dehydroalanine + ADP-5-ethyl-4-methylthiazole-2-carboxylate + nicotinamide + 3 H2O + 2 H(+). In terms of biological role, involved in biosynthesis of the thiamine precursor thiazole. Catalyzes the conversion of NAD and glycine to adenosine diphosphate 5-(2-hydroxyethyl)-4-methylthiazole-2-carboxylic acid (ADT), an adenylated thiazole intermediate. The reaction includes an iron-dependent sulfide transfer from a conserved cysteine residue of the protein to a thiazole intermediate. The enzyme can only undergo a single turnover, which suggests it is a suicide enzyme. May have additional roles in adaptation to various stress conditions and in DNA damage tolerance. The polypeptide is Thiamine thiazole synthase (thi2) (Schizosaccharomyces pombe (strain 972 / ATCC 24843) (Fission yeast)).